A 525-amino-acid chain; its full sequence is GMP synthase [glutamine-hydrolyzing] (525 aa).

One can recognise a Glutamine amidotransferase type-1 domain in the interval 16-205; it reads PVLVVDFGAQ…LHDFAGLGAQ (190 aa). Cys-93 (nucleophile) is an active-site residue. Catalysis depends on residues His-179 and Glu-181. The GMPS ATP-PPase domain occupies 206–399; the sequence is WTPANIANAL…LGLPEEIVAR (194 aa). 233 to 239 is a binding site for ATP; the sequence is SGGVDSA.

Homodimer.

It carries out the reaction XMP + L-glutamine + ATP + H2O = GMP + L-glutamate + AMP + diphosphate + 2 H(+). It participates in purine metabolism; GMP biosynthesis; GMP from XMP (L-Gln route): step 1/1. Its function is as follows. Catalyzes the synthesis of GMP from XMP. This is GMP synthase [glutamine-hydrolyzing] (guaA) from Mycobacterium tuberculosis (strain CDC 1551 / Oshkosh).